The following is a 278-amino-acid chain: HTH-type transcriptional activator RhaS (278 aa).

Residues Asn-174–Gly-272 enclose the HTH araC/xylS-type domain. 2 DNA-binding regions (H-T-H motif) span residues Asp-191 to Thr-212 and Val-239 to Phe-262.

Binds DNA as a dimer.

Its subcellular location is the cytoplasm. Its function is as follows. Activates expression of the rhaBAD and rhaT operons. The chain is HTH-type transcriptional activator RhaS from Escherichia coli O139:H28 (strain E24377A / ETEC).